Reading from the N-terminus, the 343-residue chain is NADH-quinone oxidoreductase subunit H (343 aa).

A run of 8 helical transmembrane segments spans residues 21–41, 95–115, 124–144, 172–192, 197–217, 257–277, 281–301, and 317–337; these read WTLV…LFCV, FILA…VVPF, VNVG…GVLL, MGFT…GDIV, GLWY…SVVA, IIMV…PPIE, FIPG…FFLW, and LGWK…GLAM.

This sequence belongs to the complex I subunit 1 family. NDH-1 is composed of 14 different subunits. Subunits NuoA, H, J, K, L, M, N constitute the membrane sector of the complex.

The protein localises to the cell inner membrane. It catalyses the reaction a quinone + NADH + 5 H(+)(in) = a quinol + NAD(+) + 4 H(+)(out). Functionally, NDH-1 shuttles electrons from NADH, via FMN and iron-sulfur (Fe-S) centers, to quinones in the respiratory chain. The immediate electron acceptor for the enzyme in this species is believed to be ubiquinone. Couples the redox reaction to proton translocation (for every two electrons transferred, four hydrogen ions are translocated across the cytoplasmic membrane), and thus conserves the redox energy in a proton gradient. This subunit may bind ubiquinone. The sequence is that of NADH-quinone oxidoreductase subunit H from Magnetococcus marinus (strain ATCC BAA-1437 / JCM 17883 / MC-1).